A 466-amino-acid chain; its full sequence is MAGSKIRSQYRCSECQHVAPKWVGRCANCGTWGTVDEVAVLAGNNKLNGAARRSVAPTSPAVPITSIDPGVTRHYPTGVSELDRVLGGGLVAGSVTLLAGDPGVGKSTLLLEVANRWAHSGKRALYLSGEESAGQIRLRAERTGCTHDQVYLAAESDLQIALGHIDEVKPSLVVVDSVQTMSTTEADGVTGGVTQVRAVTTSLTAYAKAAVGDPAVAMILVGHVTKDGAIAGPRSLEHLVDVVLHFEGDRASSLRMVRGVKNRFGAADEVGCFQLHDNGIECVSDPSGLFLDQRPLAVPGTAVTVTLDGKRPMIGEVQALVSPPAGPPRRAVSGIDSARAAMIGAVLQTRCRMPINSNDLYLSTVGGMRLTDPSADLAVALAIASAYFDIAMPMKAIAIGEVGLAGDLRRVTGMDRRLSEAARLGFTTAVVPPGVTSAPAGLKVVAADNIRAAVQTMREIAIAGAQ.

The C4-type zinc finger occupies Cys12–Cys29. ATP is bound at residue Gly100 to Ser107. A RadA KNRFG motif motif is present at residues Lys261 to Gly265. The tract at residues Asp359–Gln466 is lon-protease-like.

It belongs to the RecA family. RadA subfamily. Interacts with DisA.

Its function is as follows. DNA-dependent ATPase involved in processing of recombination intermediates, plays a role in repairing DNA breaks. Stimulates the branch migration of RecA-mediated strand transfer reactions, allowing the 3' invading strand to extend heteroduplex DNA faster. Binds ssDNA in the presence of ADP but not other nucleotides, has ATPase activity that is stimulated by ssDNA and various branched DNA structures, but inhibited by SSB. Does not have RecA's homology-searching function. Also inhibits the diadenylate cyclase activity of DisA. This is DNA repair protein RadA from Mycolicibacterium smegmatis (strain ATCC 700084 / mc(2)155) (Mycobacterium smegmatis).